The sequence spans 489 residues: Mitochondrial-processing peptidase subunit beta (489 aa).

The N-terminal 45 residues, 1–45, are a transit peptide targeting the mitochondrion; sequence MAAAAVSRTLLPVAGRRLWGFTRRLPLRAAAAQPLYFGGDRLRST. Zn(2+) is bound at residue H101. The Proton acceptor role is filled by E104. Positions 105 and 181 each coordinate Zn(2+).

Belongs to the peptidase M16 family. As to quaternary structure, heterodimer of PMPCA (alpha) and PMPCB (beta) subunits, forming the mitochondrial processing protease (MPP) in which PMPCA is involved in substrate recognition and binding and PMPCB is the catalytic subunit. Zn(2+) serves as cofactor.

The protein localises to the mitochondrion matrix. The enzyme catalyses Release of N-terminal transit peptides from precursor proteins imported into the mitochondrion, typically with Arg in position P2.. Its activity is regulated as follows. Binding to PMPCA is required for catalytic activity. Functionally, catalytic subunit of the essential mitochondrial processing protease (MPP), which cleaves the mitochondrial sequence off newly imported precursors proteins. Preferentially, cleaves after an arginine at position P2. Required for PINK1 turnover by coupling PINK1 mitochondrial import and cleavage, which results in subsequent PINK1 proteolysis. This chain is Mitochondrial-processing peptidase subunit beta (Pmpcb), found in Rattus norvegicus (Rat).